A 60-amino-acid polypeptide reads, in one-letter code: Cytotoxin 2 (60 aa).

Intrachain disulfides connect Cys3–Cys21, Cys14–Cys38, Cys42–Cys53, and Cys54–Cys59.

The protein belongs to the three-finger toxin family. Short-chain subfamily. Type IA cytotoxin sub-subfamily. Monomer in solution; Homodimer and oligomer in the presence of negatively charged lipids forming a pore with a size ranging between 20 and 30 Angstroms. In terms of tissue distribution, expressed by the venom gland.

It is found in the secreted. It localises to the target cell membrane. In terms of biological role, this three-finger cytotoxin is a basic protein that interacts and penetrates into the cell membrane, with the tips of all the three loops. Cytotoxins which have a Pro-30 (P-type) interacts with membrane stronger that those which have a 'Ser-28' (S-type). CTII interacts with membrane stronger than CTI. The chain is Cytotoxin 2 from Naja oxiana (Central Asian cobra).